The sequence spans 61 residues: Small ribosomal subunit protein uS14B (61 aa).

The Zn(2+) site is built by cysteine 24, cysteine 27, cysteine 40, and cysteine 43.

Belongs to the universal ribosomal protein uS14 family. Zinc-binding uS14 subfamily. Part of the 30S ribosomal subunit. Contacts proteins S3 and S10. Zn(2+) is required as a cofactor.

Binds 16S rRNA, required for the assembly of 30S particles and may also be responsible for determining the conformation of the 16S rRNA at the A site. In Lactiplantibacillus plantarum (strain ATCC BAA-793 / NCIMB 8826 / WCFS1) (Lactobacillus plantarum), this protein is Small ribosomal subunit protein uS14B.